The following is a 399-amino-acid chain: uncharacterized protein (399 aa).

This sequence belongs to the TelA family.

This is an uncharacterized protein from Listeria monocytogenes serovar 1/2a (strain ATCC BAA-679 / EGD-e).